Here is a 277-residue protein sequence, read N- to C-terminus: Nickel import ATP-binding protein NikE (277 aa).

The region spanning 14 to 253 (YRTVSLVGRS…EHPASRALQR (240 aa)) is the ABC transporter domain. An ATP-binding site is contributed by 46–53 (GRSGSGKS).

This sequence belongs to the ABC transporter superfamily. Nickel importer (TC 3.A.1.5.3) family. As to quaternary structure, the complex is composed of two ATP-binding proteins (NikD and NikE), two transmembrane proteins (NikB and NikC) and a solute-binding protein (NikA).

Its subcellular location is the cell inner membrane. The enzyme catalyses Ni(2+)(out) + ATP + H2O = Ni(2+)(in) + ADP + phosphate + H(+). In terms of biological role, part of the ABC transporter complex NikABCDE involved in nickel import. Responsible for energy coupling to the transport system. The sequence is that of Nickel import ATP-binding protein NikE from Rhodospirillum rubrum (strain ATCC 11170 / ATH 1.1.1 / DSM 467 / LMG 4362 / NCIMB 8255 / S1).